The following is a 147-amino-acid chain: Small ribosomal subunit protein uS12 (147 aa).

The interval Met1–Pro22 is disordered. A 3-methylthioaspartic acid modification is found at Asp102.

This sequence belongs to the universal ribosomal protein uS12 family. In terms of assembly, part of the 30S ribosomal subunit. Contacts proteins S8 and S17. May interact with IF1 in the 30S initiation complex.

With S4 and S5 plays an important role in translational accuracy. In terms of biological role, interacts with and stabilizes bases of the 16S rRNA that are involved in tRNA selection in the A site and with the mRNA backbone. Located at the interface of the 30S and 50S subunits, it traverses the body of the 30S subunit contacting proteins on the other side and probably holding the rRNA structure together. The combined cluster of proteins S8, S12 and S17 appears to hold together the shoulder and platform of the 30S subunit. This is Small ribosomal subunit protein uS12 from Streptococcus pyogenes serotype M12 (strain MGAS2096).